The sequence spans 175 residues: RNA pyrophosphohydrolase (175 aa).

Residues 6–149 (GYRPNVGIVI…KRDVYRRVMK (144 aa)) enclose the Nudix hydrolase domain. Positions 38–59 (GGINPGETAEQAMYRELFEEVG) match the Nudix box motif.

The protein belongs to the Nudix hydrolase family. RppH subfamily. The cofactor is a divalent metal cation.

Functionally, accelerates the degradation of transcripts by removing pyrophosphate from the 5'-end of triphosphorylated RNA, leading to a more labile monophosphorylated state that can stimulate subsequent ribonuclease cleavage. This chain is RNA pyrophosphohydrolase, found in Erwinia tasmaniensis (strain DSM 17950 / CFBP 7177 / CIP 109463 / NCPPB 4357 / Et1/99).